Here is a 163-residue protein sequence, read N- to C-terminus: R-phycoerythrin alpha chain (163 aa).

Residues Cys82 and Cys139 each coordinate (2R,3E)-phycoerythrobilin.

It belongs to the phycobiliprotein family. As to quaternary structure, heterodimer of an alpha and a beta chain. In terms of processing, contains two covalently linked bilin chromophores.

It localises to the plastid. Its subcellular location is the chloroplast thylakoid membrane. Functionally, light-harvesting photosynthetic bile pigment-protein from the phycobiliprotein complex. In Aglaothamnion neglectum (Red alga), this protein is R-phycoerythrin alpha chain (cpeA).